The following is a 185-amino-acid chain: Transcription termination/antitermination protein NusG (185 aa).

Positions 133–161 (PGEEVRVTEGPFADFNGTVEEVDYEKGRL) constitute a KOW domain.

Belongs to the NusG family.

Participates in transcription elongation, termination and antitermination. This Haemophilus influenzae (strain ATCC 51907 / DSM 11121 / KW20 / Rd) protein is Transcription termination/antitermination protein NusG.